Consider the following 362-residue polypeptide: Cytoskeleton protein RodZ (362 aa).

Topologically, residues 1–111 (MNTEASQDQT…LGKKHKKRDG (111 aa)) are cytoplasmic. An HTH cro/C1-type domain is found at 19–79 (LRQARESLGL…KLVHLPEDEL (61 aa)). Residues 30–49 (QQTVAERLCLKVSTIRDIEE) constitute a DNA-binding region (H-T-H motif). The chain crosses the membrane as a helical; Signal-anchor for type II membrane protein span at residues 112 to 132 (WLMSFTWLIVLVVLGLTGAWW). Residues 133–362 (WQNHQAQQAE…RVARLTVGVE (230 aa)) lie on the Periplasmic side of the membrane. The interval 151-277 (SAQLSQNGGQ…LPTADAGVSG (127 aa)) is disordered. Low complexity predominate over residues 193–221 (STSAVTNSATTSSATTSSVPTTSSVPKTT). Residues 223-242 (VPKTNSTEPVDTANTNTTMH) show a composition bias toward polar residues. Over residues 246–259 (AASAAVSPSQVPQP) the composition is skewed to low complexity.

The protein belongs to the RodZ family.

The protein localises to the cell inner membrane. In terms of biological role, cytoskeletal protein that is involved in cell-shape control through regulation of the length of the long axis. The polypeptide is Cytoskeleton protein RodZ (Yersinia pseudotuberculosis serotype IB (strain PB1/+)).